Reading from the N-terminus, the 357-residue chain is 4-hydroxy-2-oxovalerate aldolase (357 aa).

The tract at residues 1–21 (MSQEAARDAAAGRPVQIHDPT) is disordered. One can recognise a Pyruvate carboxyltransferase domain in the interval 15–265 (VQIHDPTLRD…RTGIDLYRLL (251 aa)). 23-24 (RD) serves as a coordination point for substrate. Asp24 contributes to the Mn(2+) binding site. The active-site Proton acceptor is the His27. The substrate site is built by Ser177 and His204. Mn(2+)-binding residues include His204 and His206.

This sequence belongs to the 4-hydroxy-2-oxovalerate aldolase family.

The enzyme catalyses (S)-4-hydroxy-2-oxopentanoate = acetaldehyde + pyruvate. Involved in the biosynthesis of the peptidyl nucleoside antibiotic nikkomycin. The chain is 4-hydroxy-2-oxovalerate aldolase from Streptomyces tendae.